The primary structure comprises 180 residues: Peptidyl-tRNA hydrolase (180 aa).

TRNA is bound at residue Y15. H20 (proton acceptor) is an active-site residue. F67, N69, and N115 together coordinate tRNA.

Belongs to the PTH family. Monomer.

It is found in the cytoplasm. The catalysed reaction is an N-acyl-L-alpha-aminoacyl-tRNA + H2O = an N-acyl-L-amino acid + a tRNA + H(+). In terms of biological role, hydrolyzes ribosome-free peptidyl-tRNAs (with 1 or more amino acids incorporated), which drop off the ribosome during protein synthesis, or as a result of ribosome stalling. Catalyzes the release of premature peptidyl moieties from peptidyl-tRNA molecules trapped in stalled 50S ribosomal subunits, and thus maintains levels of free tRNAs and 50S ribosomes. The polypeptide is Peptidyl-tRNA hydrolase (Chlamydia pneumoniae (Chlamydophila pneumoniae)).